Reading from the N-terminus, the 128-residue chain is Large ribosomal subunit protein bL17 (128 aa).

The protein belongs to the bacterial ribosomal protein bL17 family. Part of the 50S ribosomal subunit. Contacts protein L32.

In Tolumonas auensis (strain DSM 9187 / NBRC 110442 / TA 4), this protein is Large ribosomal subunit protein bL17.